The primary structure comprises 95 residues: Glutamyl-tRNA(Gln) amidotransferase subunit C (95 aa).

This sequence belongs to the GatC family. As to quaternary structure, heterotrimer of A, B and C subunits.

The catalysed reaction is L-glutamyl-tRNA(Gln) + L-glutamine + ATP + H2O = L-glutaminyl-tRNA(Gln) + L-glutamate + ADP + phosphate + H(+). The enzyme catalyses L-aspartyl-tRNA(Asn) + L-glutamine + ATP + H2O = L-asparaginyl-tRNA(Asn) + L-glutamate + ADP + phosphate + 2 H(+). Functionally, allows the formation of correctly charged Asn-tRNA(Asn) or Gln-tRNA(Gln) through the transamidation of misacylated Asp-tRNA(Asn) or Glu-tRNA(Gln) in organisms which lack either or both of asparaginyl-tRNA or glutaminyl-tRNA synthetases. The reaction takes place in the presence of glutamine and ATP through an activated phospho-Asp-tRNA(Asn) or phospho-Glu-tRNA(Gln). The chain is Glutamyl-tRNA(Gln) amidotransferase subunit C from Rhizobium meliloti (strain 1021) (Ensifer meliloti).